We begin with the raw amino-acid sequence, 69 residues long: Disintegrin EC6 subunit beta (69 aa).

The 65-residue stretch at 1-65 folds into the Disintegrin domain; it reads NSVHPCCDPV…DCPPNPWNGK (65 aa). Cystine bridges form between Cys6/Cys29, Cys20/Cys26, Cys25/Cys50, and Cys38/Cys57. Positions 42–44 match the Cell attachment site motif; the sequence is RGD.

This sequence belongs to the venom metalloproteinase (M12B) family. P-II subfamily. P-IIe sub-subfamily. As to quaternary structure, heterodimer with subunit alpha; disulfide-linked. In terms of tissue distribution, expressed by the venom gland.

It localises to the secreted. Functionally, potently inhibits adhesion of alpha-4/beta-1 (ITGA4/ITGB1) and alpha-9/beta-1 (ITGA9/ITGB1) integrins to VCAM1, and adhesion of alpha-5/beta-1 (ITGA5/ITGB1) integrin to fibronectin. Has a much less effect on alpha-IIb/beta-3 (ITGA2B/ITGB3) integrin. Also potently inhibits neutrophil migration across TNF-alpha-activated human umbilical endothelial cells. The sequence is that of Disintegrin EC6 subunit beta from Echis carinatus sochureki (Saw-scaled viper).